A 270-amino-acid chain; its full sequence is Formamidopyrimidine-DNA glycosylase (270 aa).

The active-site Schiff-base intermediate with DNA is proline 2. Glutamate 3 serves as the catalytic Proton donor. The Proton donor; for beta-elimination activity role is filled by lysine 58. The DNA site is built by histidine 91, arginine 110, and arginine 151. The FPG-type zinc finger occupies 236–270 (FVYGRGGEFCKSCGSTLREIRLGQRASVYCSRCQR). Arginine 260 serves as the catalytic Proton donor; for delta-elimination activity.

Belongs to the FPG family. Monomer. Zn(2+) serves as cofactor.

It catalyses the reaction Hydrolysis of DNA containing ring-opened 7-methylguanine residues, releasing 2,6-diamino-4-hydroxy-5-(N-methyl)formamidopyrimidine.. It carries out the reaction 2'-deoxyribonucleotide-(2'-deoxyribose 5'-phosphate)-2'-deoxyribonucleotide-DNA = a 3'-end 2'-deoxyribonucleotide-(2,3-dehydro-2,3-deoxyribose 5'-phosphate)-DNA + a 5'-end 5'-phospho-2'-deoxyribonucleoside-DNA + H(+). Its function is as follows. Involved in base excision repair of DNA damaged by oxidation or by mutagenic agents. Acts as a DNA glycosylase that recognizes and removes damaged bases. Has a preference for oxidized purines, such as 7,8-dihydro-8-oxoguanine (8-oxoG). Has AP (apurinic/apyrimidinic) lyase activity and introduces nicks in the DNA strand. Cleaves the DNA backbone by beta-delta elimination to generate a single-strand break at the site of the removed base with both 3'- and 5'-phosphates. The sequence is that of Formamidopyrimidine-DNA glycosylase from Stutzerimonas stutzeri (strain A1501) (Pseudomonas stutzeri).